The chain runs to 323 residues: Beta-ketoacyl-[acyl-carrier-protein] synthase III (323 aa).

Active-site residues include Cys-114 and His-250. The ACP-binding stretch occupies residues 251–255 (QANIR). Asn-280 is an active-site residue.

This sequence belongs to the thiolase-like superfamily. FabH family. In terms of assembly, homodimer.

It is found in the cytoplasm. The enzyme catalyses malonyl-[ACP] + acetyl-CoA + H(+) = 3-oxobutanoyl-[ACP] + CO2 + CoA. It participates in lipid metabolism; fatty acid biosynthesis. Catalyzes the condensation reaction of fatty acid synthesis by the addition to an acyl acceptor of two carbons from malonyl-ACP. Catalyzes the first condensation reaction which initiates fatty acid synthesis and may therefore play a role in governing the total rate of fatty acid production. Possesses both acetoacetyl-ACP synthase and acetyl transacylase activities. Its substrate specificity determines the biosynthesis of branched-chain and/or straight-chain of fatty acids. The polypeptide is Beta-ketoacyl-[acyl-carrier-protein] synthase III (Ruegeria sp. (strain TM1040) (Silicibacter sp.)).